The chain runs to 186 residues: dCTP deaminase (186 aa).

Lys107–Arg112 is a dCTP binding site. Catalysis depends on Glu133, which acts as the Proton donor/acceptor. Residues Gln152, Tyr166, and Gln176 each coordinate dCTP.

It belongs to the dCTP deaminase family. In terms of assembly, homotrimer.

It carries out the reaction dCTP + H2O + H(+) = dUTP + NH4(+). It participates in pyrimidine metabolism; dUMP biosynthesis; dUMP from dCTP (dUTP route): step 1/2. Its function is as follows. Catalyzes the deamination of dCTP to dUTP. In Campylobacter curvus (strain 525.92), this protein is dCTP deaminase.